The chain runs to 86 residues: MKQKLLLSGLAVSTVGITSYLLKDPSNRQKAREFIHSMKMKITKQPDMETFPVDKAGHPDPQDIEDNKMVSEGSMYPVQYYDEKKK.

Residues 1–31 (MKQKLLLSGLAVSTVGITSYLLKDPSNRQKA) form the signal peptide. Residues 46-69 (PDMETFPVDKAGHPDPQDIEDNKM) are disordered. Residues 55–69 (KAGHPDPQDIEDNKM) show a composition bias toward basic and acidic residues.

This is an uncharacterized protein from Bacillus subtilis (strain 168).